Reading from the N-terminus, the 518-residue chain is F-box protein At1g47056 (518 aa).

An F-box domain is found at 37-82; the sequence is PDYTSSLPDECLALVFQFLNSGNRKRCALVCRRWMIVEGQNRYRLS.

This is F-box protein At1g47056 from Arabidopsis thaliana (Mouse-ear cress).